The primary structure comprises 77 residues: UPF0346 protein lin1971 (77 aa).

Belongs to the UPF0346 family.

This chain is UPF0346 protein lin1971, found in Listeria innocua serovar 6a (strain ATCC BAA-680 / CLIP 11262).